The following is an 89-amino-acid chain: Cell division protein FtsL (89 aa).

The Cytoplasmic segment spans residues Met1–Leu6. A helical membrane pass occupies residues Asn7 to Gln24. Topologically, residues Gln25–Arg89 are periplasmic. The stretch at Thr33–Asn73 forms a coiled coil.

It belongs to the FtsL family. Part of a complex composed of FtsB, FtsL and FtsQ.

The protein resides in the cell inner membrane. Essential cell division protein. May link together the upstream cell division proteins, which are predominantly cytoplasmic, with the downstream cell division proteins, which are predominantly periplasmic. The polypeptide is Cell division protein FtsL (Neisseria meningitidis serogroup B (strain ATCC BAA-335 / MC58)).